Here is a 482-residue protein sequence, read N- to C-terminus: Methylenetetrahydrofolate--tRNA-(uracil-5-)-methyltransferase TrmFO (482 aa).

11-16 (GGGLAG) lines the FAD pocket. The tract at residues 450 to 482 (LRQPSPWSAEDSPRAALPIPEPTPLGPASGSSE) is disordered.

The protein belongs to the MnmG family. TrmFO subfamily. FAD is required as a cofactor.

The protein resides in the cytoplasm. The enzyme catalyses uridine(54) in tRNA + (6R)-5,10-methylene-5,6,7,8-tetrahydrofolate + NADH + H(+) = 5-methyluridine(54) in tRNA + (6S)-5,6,7,8-tetrahydrofolate + NAD(+). It carries out the reaction uridine(54) in tRNA + (6R)-5,10-methylene-5,6,7,8-tetrahydrofolate + NADPH + H(+) = 5-methyluridine(54) in tRNA + (6S)-5,6,7,8-tetrahydrofolate + NADP(+). In terms of biological role, catalyzes the folate-dependent formation of 5-methyl-uridine at position 54 (M-5-U54) in all tRNAs. This is Methylenetetrahydrofolate--tRNA-(uracil-5-)-methyltransferase TrmFO from Rhodospirillum rubrum (strain ATCC 11170 / ATH 1.1.1 / DSM 467 / LMG 4362 / NCIMB 8255 / S1).